The chain runs to 154 residues: UPF0225 protein YPDSF_0962 (154 aa).

It belongs to the UPF0225 family.

This chain is UPF0225 protein YPDSF_0962, found in Yersinia pestis (strain Pestoides F).